The chain runs to 200 residues: Kunitz type trypsin inhibitor 111 (200 aa).

Residues 1–24 form the signal peptide; that stretch reads MSTISFTIFILANVWLLVVTTSIA. Cystine bridges form between C62-C108, C160-C172, and C165-C168.

It belongs to the protease inhibitor I3 (leguminous Kunitz-type inhibitor) family. Interacts with SCP1.

It localises to the secreted. The protein resides in the extracellular space. The protein localises to the apoplast. This Medicago truncatula (Barrel medic) protein is Kunitz type trypsin inhibitor 111 (KPI111).